The primary structure comprises 435 residues: Nuclear hormone receptor family member nhr-136 (435 aa).

Positions 50 to 129 (PSNCKVCRHS…AGMNPSAIQA (80 aa)) form a DNA-binding region, nuclear receptor. NR C4-type zinc fingers lie at residues 53 to 73 (CKVC…CNGC) and 89 to 112 (CLKM…CRAC). Positions 194–430 (RDIRKLDELI…RYTRISNLYE (237 aa)) constitute an NR LBD domain.

This sequence belongs to the nuclear hormone receptor family.

It localises to the nucleus. Orphan nuclear receptor. The protein is Nuclear hormone receptor family member nhr-136 (nhr-136) of Caenorhabditis elegans.